We begin with the raw amino-acid sequence, 228 residues long: Lactate utilization protein A (228 aa).

The protein belongs to the LutA/YkgE family.

Functionally, is involved in L-lactate degradation and allows cells to grow with lactate as the sole carbon source. The protein is Lactate utilization protein A of Lysinibacillus sphaericus (strain C3-41).